We begin with the raw amino-acid sequence, 208 residues long: Large ribosomal subunit protein uL3 (208 aa).

The disordered stretch occupies residues 116 to 148; it reads GFQGVIKRHGQSRGPMAHGSRYHRRPGSMGPVA.

This sequence belongs to the universal ribosomal protein uL3 family. Part of the 50S ribosomal subunit. Forms a cluster with proteins L14 and L19.

Its function is as follows. One of the primary rRNA binding proteins, it binds directly near the 3'-end of the 23S rRNA, where it nucleates assembly of the 50S subunit. The sequence is that of Large ribosomal subunit protein uL3 from Streptococcus pyogenes serotype M5 (strain Manfredo).